The chain runs to 139 residues: Lamprin 0.9 (139 aa).

The signal sequence occupies residues 1 to 19 (MAAAIQALLVLALLHLATA). Repeat copies occupy residues 42–46 (GGLGY), 47–51 (GGLGY), 52–56 (GGLGV), 57–61 (AGLGV), 62–66 (AGLGY), 67–71 (GGLGY), 92–96 (GGLGY), and 106–110 (GGLGY). The tract at residues 42–110 (GGLGYGGLGY…YHHALGGLGY (69 aa)) is 8 X 5 AA approximate repeats.

As to quaternary structure, the polymeric lamprin chains self-aggregate to form fibers and have secondary structures particularly rich in beta-sheets and in beta-turns.

It localises to the secreted. The protein resides in the extracellular space. Its subcellular location is the extracellular matrix. Functionally, self-aggregating protein that is part of the soluble form of lamprin. The protein is Lamprin 0.9 of Petromyzon marinus (Sea lamprey).